A 323-amino-acid chain; its full sequence is Putative HTH-type transcriptional regulatory protein Mbur_1811 (323 aa).

Positions 132 to 190 (LKEARMNVSMSLGALASELGVSRRTISKYEEGQMDASIDIVLHLEEILDMALAKSIDIL) constitute an HTH cro/C1-type domain. A DNA-binding region (H-T-H motif) is located at residues 143-162 (LGALASELGVSRRTISKYEE).

In Methanococcoides burtonii (strain DSM 6242 / NBRC 107633 / OCM 468 / ACE-M), this protein is Putative HTH-type transcriptional regulatory protein Mbur_1811.